Here is a 476-residue protein sequence, read N- to C-terminus: RNA-binding protein 45 (476 aa).

Residues 1–14 show a composition bias toward gly residues; that stretch reads MDDAGGLGGSGGFR. A disordered region spans residues 1 to 20; the sequence is MDDAGGLGGSGGFRPGVDSL. RRM domains lie at 26-106 and 121-192; these read SRIF…IAQS and TRIF…LAEP. Lys34 is covalently cross-linked (Glycyl lysine isopeptide (Lys-Gly) (interchain with G-Cter in SUMO2)). A disordered region spans residues 192–212; that stretch reads PKNKVSGSPEQDDYSSGRQEA. A compositionally biased stretch (polar residues) spans 196-209; the sequence is VSGSPEQDDYSSGR. 2 positions are modified to phosphoserine: Ser199 and Ser464. In terms of domain architecture, RRM 3 spans 392–464; the sequence is ERLFVVFNPH…VRLKVMLADS (73 aa).

It localises to the cytoplasm. The protein localises to the nucleus. RNA-binding protein with binding specificity for poly(C). May play an important role in neural development. This is RNA-binding protein 45 (Rbm45) from Mus musculus (Mouse).